An 862-amino-acid polypeptide reads, in one-letter code: Kinesin-like protein KIN-7E (862 aa).

Residues 24–346 form the Kinesin motor domain; the sequence is KILVLVRLRP…LLFACCAKEV (323 aa). Residue 110-117 participates in ATP binding; sequence GQTSSGKT. Residues 355–428 adopt a coiled-coil conformation; the sequence is VMSDKALVKQ…RLEDFMKMVE (74 aa). 2 disordered regions span residues 463-505 and 542-632; these read RTSF…QSEE and ANGE…TPLV. A compositionally biased stretch (polar residues) spans 465 to 476; it reads SFISDGTSTPLS. The span at 494–505 shows a compositional bias: basic and acidic residues; it reads MSPRHSGDQSEE. Over residues 612–621 the composition is skewed to polar residues; the sequence is DSMTSRGSDS. K734 is covalently cross-linked (Glycyl lysine isopeptide (Lys-Gly) (interchain with G-Cter in ubiquitin)).

Belongs to the TRAFAC class myosin-kinesin ATPase superfamily. Kinesin family. KIN-7 subfamily.

The polypeptide is Kinesin-like protein KIN-7E (Arabidopsis thaliana (Mouse-ear cress)).